Reading from the N-terminus, the 705-residue chain is Probable iron-sulfur-binding oxidoreductase FadF (705 aa).

Transmembrane regions (helical) follow at residues Phe-4–Val-24, Ile-71–Ile-91, Ala-109–Phe-129, Ala-146–Met-166, His-173–Gly-193, and Val-199–Val-219. 2 consecutive 4Fe-4S ferredoxin-type domains span residues Gln-268–Pro-298 and Gly-360–Ile-391. Positions 277, 280, 283, 287, 371, 374, 377, and 381 each coordinate [4Fe-4S] cluster.

[4Fe-4S] cluster is required as a cofactor.

The protein localises to the cell membrane. The sequence is that of Probable iron-sulfur-binding oxidoreductase FadF (fadF) from Bacillus subtilis (strain 168).